We begin with the raw amino-acid sequence, 260 residues long: MELTQPAEDLIQTQQTPASELGDPEDPGEEAADGSDTVVLSLFPCTPEPVNPEPDASVSSPQAGSSLKHSTTLTNRQRGNEVSALPATLDSLSIHQLAAQGELDQLKEHLRKGDNLVNKPDERGFTPLIWASAFGEIETVRFLLEWGADPHILAKERESALSLASTGGYTDIVGLLLERDVDINIYDWNGGTPLLYAVRGNHVKCVEALLARGADLTTEADSGYTPMDLAVALGYRKVQQVIENHILKLFQSNLVPADPE.

The disordered stretch occupies residues 1-79 (MELTQPAEDL…STTLTNRQRG (79 aa)). A compositionally biased stretch (acidic residues) spans 22-33 (GDPEDPGEEAAD). Positions 57–77 (SVSSPQAGSSLKHSTTLTNRQ) are enriched in polar residues. 5 ANK repeats span residues 89–118 (LDSL…NLVN), 123–152 (RGFT…DPHI), 156–185 (ERES…DINI), 189–218 (NGGT…DLTT), and 222–251 (SGYT…KLFQ).

Forms homodimers. The RFX heterotetrameric complex consists of 2 molecules of RFX5 and one each of RFXAP and RFX-B/RFXANK; with each subunit representing a separate complementation group. Interacts (via ankyrin repeats) with RFX5 (via PxLPxI/L motif); the interaction is direct. RFX forms cooperative DNA binding complexes with X2BP and CBF/NF-Y. RFX associates with CIITA to form an active transcriptional complex. Interacts with RAF1. Interacts (via ankyrin repeats) with RFX7 (via PxLPxI/L motif). Post-translationally, phosphorylated by RAF1. Ubiquitous.

The protein resides in the cytoplasm. It is found in the nucleus. Activates transcription from class II MHC promoters. Activation requires the activity of the MHC class II transactivator/CIITA. May regulate other genes in the cell. RFX binds the X1 box of MHC-II promoters. May also potentiate the activation of RAF1. In terms of biological role, isoform 2 is not involved in the positive regulation of MHC class II genes. The polypeptide is DNA-binding protein RFXANK (RFXANK) (Homo sapiens (Human)).